We begin with the raw amino-acid sequence, 205 residues long: Probable GTP-binding protein EngB (205 aa).

Residues 27 to 201 form the EngB-type G domain; sequence TGIEIAFAGR…AAKLDFWFSP (175 aa). Residues 35-42, 62-66, 80-83, 147-150, and 180-182 contribute to the GTP site; these read GRSNAGKS, GRTQL, DLPG, TKAD, and FSA. Mg(2+)-binding residues include Ser-42 and Thr-64.

The protein belongs to the TRAFAC class TrmE-Era-EngA-EngB-Septin-like GTPase superfamily. EngB GTPase family. Mg(2+) serves as cofactor.

Necessary for normal cell division and for the maintenance of normal septation. This Haemophilus influenzae (strain 86-028NP) protein is Probable GTP-binding protein EngB.